The sequence spans 225 residues: Histone-arginine methyltransferase METTL23 (225 aa).

It belongs to the methyltransferase superfamily. METTL23 family. Interacts with HSPA5, HSP90B1, TUBULIN, UGGT1 and UGGT2. Interacts with TET3. Interacts with STPG4.

Its subcellular location is the nucleus. The protein resides in the cytoplasm. The catalysed reaction is L-arginyl-[protein] + 2 S-adenosyl-L-methionine = N(omega),N(omega)-dimethyl-L-arginyl-[protein] + 2 S-adenosyl-L-homocysteine + 2 H(+). Histone methyltransferase that dimethylates histone H3 at 'Arg-17', forming asymmetric dimethylarginine (H3R17me2a), leading to activate transcription via chromatin remodeling. Maternal factor involved in epigenetic chromatin reprogramming of the paternal genome in the zygote: mediates H3R17me2a, promoting histone H3.3 incorporation in the male pronucleus, leading to TET3 recruitment and subsequent DNA demethylation. The sequence is that of Histone-arginine methyltransferase METTL23 from Rattus norvegicus (Rat).